A 1679-amino-acid polypeptide reads, in one-letter code: AF4/FMR2 family member lilli (1679 aa).

8 disordered regions span residues 1–21, 55–78, 124–305, 406–539, 580–609, 733–755, 783–1172, and 1197–1319; these read MAQQQQQQLQQQQQHHTSSIN, NYNMEEYERRKRREREKIERQQGI, RSAP…EKDV, LHQL…GAQN, MGAGSGSGGTLSSGGSSSNKTPSPTESNKW, DSGTSASGSSSSSSSSSDSAVGG, QPTQ…TTPH, and TPAQ…LQIG. The span at 69–78 shows a compositional bias: basic and acidic residues; the sequence is REKIERQQGI. Low complexity-rich tracts occupy residues 144-181 and 212-244; these read SLGHSPSSASASAAAGPTSASATTALPGQQQQHYQQQQ and PSSSGMAPPRGPPRSSSSNSNSSSATNNASSGG. Position 421 is a phosphothreonine (Thr-421). The span at 429-442 shows a compositional bias: basic and acidic residues; sequence LKTEKNHSLEKQDS. The span at 444-455 shows a compositional bias: acidic residues; sequence LENDLELSESED. Ser-451 and Ser-453 each carry phosphoserine. Residues 464–484 are compositionally biased toward low complexity; that stretch reads SAGNSSNSSESDSSESGSESS. The span at 492–501 shows a compositional bias: basic residues; that stretch reads HPNHQQHHHQ. The span at 502–532 shows a compositional bias: low complexity; the sequence is LQQQQQQQQQQASMQQQQVLQQQQQHRPQPL. Residues 582–591 show a composition bias toward gly residues; sequence AGSGSGGTLS. Residues 598–609 show a composition bias toward polar residues; it reads NKTPSPTESNKW. Positions 733-752 are enriched in low complexity; the sequence is DSGTSASGSSSSSSSSSDSA. Residues 783 to 796 are compositionally biased toward polar residues; that stretch reads QPTQSQKAPPSNSV. Residues 810–820 show a composition bias toward basic residues; that stretch reads QRQKKPRKKKA. Ser-829 and Ser-830 each carry phosphoserine. The a.T hook DNA-binding region spans 859-871; that stretch reads KKGRGRPRKQQQS. The span at 868-906 shows a compositional bias: low complexity; it reads QQQSGGSGNLSSASAGSSSQTKGPTLTAAKKPLAKTPLA. Phosphoserine occurs at positions 879 and 881. The segment covering 917 to 927 has biased composition (polar residues); that stretch reads SQSSSNGNTPT. Low complexity-rich tracts occupy residues 957-973 and 1001-1012; these read SSSAESSSKSSSSSSSS and GSGSSSPSSSGS. The segment covering 1019–1030 has biased composition (polar residues); the sequence is TRSQVGSGQALA. A compositionally biased stretch (low complexity) spans 1042–1068; sequence SQHSQHLSSSECSSSSGGCTAVCSSSS. Basic and acidic residues predominate over residues 1073–1090; sequence EGRREKERERKPKSDKNK. Over residues 1130–1140 the composition is skewed to pro residues; the sequence is QPPPPQAPPAA. Polar residues predominate over residues 1198–1213; it reads PAQQNGHLTPKDQATN. Composition is skewed to basic and acidic residues over residues 1234 to 1251 and 1260 to 1288; these read EHPVKPEPELDAGYEAKF and FQLKQERDRDRERERERERERDREREQPP. Phosphoserine is present on Ser-1368. At Thr-1370 the chain carries Phosphothreonine. Residues 1569-1589 are compositionally biased toward low complexity; it reads GNTPSSISPSNSVGSQGSGSN. Residues 1569 to 1594 are disordered; the sequence is GNTPSSISPSNSVGSQGSGSNTPPGR.

It belongs to the AF4 family.

The protein localises to the nucleus. Has a role in transcriptional regulation. Acts in parallel with the Ras/MAPK and the PI3K/PKB pathways in the control of cell identity and cellular growth. Essential for regulation of the cytoskeleton and cell growth but not for cell proliferation or growth rate. Required specifically for the microtubule-based basal transport of lipid droplets. Plays a partially redundant function downstream of Raf in cell fate specification in the developing eye. Pair-rule protein that regulates embryonic cellularization, gastrulation and segmentation. This Drosophila erecta (Fruit fly) protein is AF4/FMR2 family member lilli.